Consider the following 158-residue polypeptide: Retinoic acid receptor beta (158 aa).

A compositionally biased stretch (low complexity) spans 1–18; that stretch reads RHSAQSIETQSTSSEELV. Positions 1-24 are disordered; sequence RHSAQSIETQSTSSEELVPSPPSP. Residues 31 to 106 constitute a DNA-binding region (nuclear receptor); it reads YKPCFVCQDK…VGMSKESVRN (76 aa). 2 NR C4-type zinc fingers span residues 34-54 and 70-94; these read CFVC…CEGC and CHRD…LQRC. In terms of domain architecture, NR LBD spans 129–158; it reads ELDDLTEKIRKAHQETFPSLCQLGKYTTNS.

It belongs to the nuclear hormone receptor family. NR1 subfamily. In terms of assembly, heterodimer; with a RXR molecule. Binds DNA preferentially as a RAR/RXR heterodimer.

The protein localises to the nucleus. In terms of biological role, receptor for retinoic acid. Retinoic acid receptors bind as heterodimers to their target response elements in response to their ligands, all-trans or 9-cis retinoic acid, and regulate gene expression in various biological processes. The RAR/RXR heterodimers bind to the retinoic acid response elements (RARE) composed of tandem 5'-AGGTCA-3' sites known as DR1-DR5. The sequence is that of Retinoic acid receptor beta (RARB) from Notophthalmus viridescens (Eastern newt).